The sequence spans 92 residues: RNA-binding protein Hfq (92 aa).

Residues 9 to 68 form the Sm domain; it reads DPFLNALRRERVPVSIYLVNGIKLQGQVESFDQFVILLKNTVSQMVYKHAISTVVPARPF. Residues 68–92 form a disordered region; that stretch reads FNVSSHHNTPNQAAGYNASHDDSAE. The span at 69-81 shows a compositional bias: polar residues; it reads NVSSHHNTPNQAA.

It belongs to the Hfq family. In terms of assembly, homohexamer.

RNA chaperone that binds small regulatory RNA (sRNAs) and mRNAs to facilitate mRNA translational regulation in response to envelope stress, environmental stress and changes in metabolite concentrations. Also binds with high specificity to tRNAs. This Shewanella loihica (strain ATCC BAA-1088 / PV-4) protein is RNA-binding protein Hfq.